The sequence spans 578 residues: Telomere repeat-binding protein 1 (578 aa).

The Ubiquitin-like domain maps to 293–372 (VKLRIKSFRV…HLDSLDFSLE (80 aa)). The tract at residues 440-467 (ELSSQSQPPSRKSRRSEQQQQQAAQRRI) is disordered. In terms of domain architecture, HTH myb-type spans 463–522 (AQRRIRRPFSVAEVEALVQAVEKLGTGRWRDVKLCAFEDADHRTYVDLKDKWKTLVHTAK). 3 interaction with DNA regions span residues 465-469 (RRIRR), 511-515 (KDKWK), and 522-529 (KISPQQRR). A DNA-binding region (H-T-H motif) is located at residues 491 to 518 (WRDVKLCAFEDADHRTYVDLKDKWKTLV).

In terms of assembly, homodimer and heterodimer with TRP2 and TRP3. Interacts with KU70. In terms of tissue distribution, expressed ubiquitously. Highest expression in flowers and leaves.

It is found in the nucleus. Functionally, binds specifically to the plant telomeric double-stranded DNA sequences 5'-GGTTTAG-3'. At least 4 repeats of telomeric sequences are required for binding. Induces DNA bending. The protein is Telomere repeat-binding protein 1 (TRP1) of Arabidopsis thaliana (Mouse-ear cress).